Reading from the N-terminus, the 106-residue chain is Large ribosomal subunit protein P2 (106 aa).

A disordered region spans residues 79–106 (GAGAVAEAKKEEPEEEEADDDMGFGLFD). Over residues 91-100 (PEEEEADDDM) the composition is skewed to acidic residues.

Belongs to the eukaryotic ribosomal protein P1/P2 family. In terms of assembly, P1 and P2 exist as dimers at the large ribosomal subunit. Phosphorylated.

Its function is as follows. Plays an important role in the elongation step of protein synthesis. This is Large ribosomal subunit protein P2 (LIP) from Leishmania infantum.